We begin with the raw amino-acid sequence, 359 residues long: Phospho-N-acetylmuramoyl-pentapeptide-transferase (359 aa).

10 helical membrane-spanning segments follow: residues 3–23 (QILI…PVLI), 55–75 (VAII…GVLM), 84–104 (GLLV…DDLI), 117–137 (TAKT…ALQF), 156–176 (IATV…VVSA), 190–210 (LAAG…FWQF), 231–251 (LAII…WNAA), 255–275 (IFMG…LSVT), 283–303 (VVLG…ILAF), and 330–350 (VIIR…ALFY).

It belongs to the glycosyltransferase 4 family. MraY subfamily. Mg(2+) is required as a cofactor.

It is found in the cell membrane. It catalyses the reaction UDP-N-acetyl-alpha-D-muramoyl-L-alanyl-gamma-D-glutamyl-meso-2,6-diaminopimeloyl-D-alanyl-D-alanine + di-trans,octa-cis-undecaprenyl phosphate = di-trans,octa-cis-undecaprenyl diphospho-N-acetyl-alpha-D-muramoyl-L-alanyl-D-glutamyl-meso-2,6-diaminopimeloyl-D-alanyl-D-alanine + UMP. The protein operates within cell wall biogenesis; peptidoglycan biosynthesis. In terms of biological role, catalyzes the initial step of the lipid cycle reactions in the biosynthesis of the cell wall peptidoglycan: transfers peptidoglycan precursor phospho-MurNAc-pentapeptide from UDP-MurNAc-pentapeptide onto the lipid carrier undecaprenyl phosphate, yielding undecaprenyl-pyrophosphoryl-MurNAc-pentapeptide, known as lipid I. The chain is Phospho-N-acetylmuramoyl-pentapeptide-transferase from Mycolicibacterium gilvum (strain PYR-GCK) (Mycobacterium gilvum (strain PYR-GCK)).